The chain runs to 688 residues: Methionine--tRNA ligase (688 aa).

Positions 13–23 (PYANGPIHIGH) match the 'HIGH' region motif. Positions 144, 147, 157, and 160 each coordinate Zn(2+). Positions 334-338 (KMSKS) match the 'KMSKS' region motif. Position 337 (Lys337) interacts with ATP. Residues 582–688 (DFAKIDLRVA…AGAVPGMRVR (107 aa)) form the tRNA-binding domain.

The protein belongs to the class-I aminoacyl-tRNA synthetase family. MetG type 1 subfamily. In terms of assembly, homodimer. The cofactor is Zn(2+).

Its subcellular location is the cytoplasm. The catalysed reaction is tRNA(Met) + L-methionine + ATP = L-methionyl-tRNA(Met) + AMP + diphosphate. Is required not only for elongation of protein synthesis but also for the initiation of all mRNA translation through initiator tRNA(fMet) aminoacylation. The chain is Methionine--tRNA ligase from Ralstonia nicotianae (strain ATCC BAA-1114 / GMI1000) (Ralstonia solanacearum).